We begin with the raw amino-acid sequence, 433 residues long: tRNA-2-methylthio-N(6)-dimethylallyladenosine synthase (433 aa).

The 116-residue stretch at 4-119 folds into the MTTase N-terminal domain; that stretch reads KKLFIQTLGC…ITQAIKTPKF (116 aa). Cys13, Cys50, Cys82, Cys151, Cys155, and Cys158 together coordinate [4Fe-4S] cluster. The Radical SAM core domain occupies 137–370; sequence RNSIYKSYIN…QNRHSEILDE (234 aa). Residues 373 to 433 enclose the TRAM domain; it reads KKQENKTFKV…KRMVLYGEIV (61 aa).

The protein belongs to the methylthiotransferase family. MiaB subfamily. Monomer. [4Fe-4S] cluster is required as a cofactor.

The protein localises to the cytoplasm. It catalyses the reaction N(6)-dimethylallyladenosine(37) in tRNA + (sulfur carrier)-SH + AH2 + 2 S-adenosyl-L-methionine = 2-methylsulfanyl-N(6)-dimethylallyladenosine(37) in tRNA + (sulfur carrier)-H + 5'-deoxyadenosine + L-methionine + A + S-adenosyl-L-homocysteine + 2 H(+). Catalyzes the methylthiolation of N6-(dimethylallyl)adenosine (i(6)A), leading to the formation of 2-methylthio-N6-(dimethylallyl)adenosine (ms(2)i(6)A) at position 37 in tRNAs that read codons beginning with uridine. The protein is tRNA-2-methylthio-N(6)-dimethylallyladenosine synthase of Campylobacter jejuni (strain RM1221).